Reading from the N-terminus, the 59-residue chain is Large ribosomal subunit protein bL32 (59 aa).

The segment at 1–20 (MAVQQNKKSRSRKGMRRSHD) is disordered. A compositionally biased stretch (basic residues) spans 7–19 (KKSRSRKGMRRSH).

The protein belongs to the bacterial ribosomal protein bL32 family.

The protein is Large ribosomal subunit protein bL32 of Nitratidesulfovibrio vulgaris (strain ATCC 29579 / DSM 644 / CCUG 34227 / NCIMB 8303 / VKM B-1760 / Hildenborough) (Desulfovibrio vulgaris).